The sequence spans 201 residues: Recombination protein RecR (201 aa).

Residues 60 to 75 (CSVCGNVDSCDPCTIC) form a C4-type zinc finger. The 96-residue stretch at 83-178 (STLIVVETVG…RTTRLAHGVP (96 aa)) folds into the Toprim domain.

The protein belongs to the RecR family.

In terms of biological role, may play a role in DNA repair. It seems to be involved in an RecBC-independent recombinational process of DNA repair. It may act with RecF and RecO. The polypeptide is Recombination protein RecR (Methylocella silvestris (strain DSM 15510 / CIP 108128 / LMG 27833 / NCIMB 13906 / BL2)).